A 561-amino-acid chain; its full sequence is CWF19-like protein mug161 (561 aa).

Positions 286 to 338 (QQTNKFHKSKSSTALFKSKKDSSSSLNKMHKSESHSALNNLHKSESGTSLNNR) are disordered. Position 296 is a phosphoserine (Ser-296). A Phosphothreonine modification is found at Thr-298. Ser-317, Ser-319, Ser-331, and Ser-334 each carry phosphoserine. The segment covering 320–337 (HSALNNLHKSESGTSLNN) has biased composition (polar residues).

It belongs to the CWF19 family.

Its subcellular location is the nucleus. Its function is as follows. Has a role in meiosis. The sequence is that of CWF19-like protein mug161 (mug161) from Schizosaccharomyces pombe (strain 972 / ATCC 24843) (Fission yeast).